Consider the following 337-residue polypeptide: Holliday junction branch migration complex subunit RuvB (337 aa).

The segment at 1-179 is large ATPase domain (RuvB-L); that stretch reads MTHQVSVLHQ…FSFTGRMSYY (179 aa). ATP contacts are provided by residues Leu-18, Arg-19, Gly-60, Lys-63, Thr-64, Ser-65, 126 to 128, Arg-169, Tyr-179, and Arg-216; that span reads EDY. Thr-64 serves as a coordination point for Mg(2+). The interval 180-250 is small ATPAse domain (RuvB-S); it reads SDEDLTTILK…VAEKALAMLL (71 aa). A head domain (RuvB-H) region spans residues 253–337; sequence DWGLNEIDIK…DNLQSLGEEK (85 aa). DNA contacts are provided by Lys-308 and Arg-313.

The protein belongs to the RuvB family. In terms of assembly, homohexamer. Forms an RuvA(8)-RuvB(12)-Holliday junction (HJ) complex. HJ DNA is sandwiched between 2 RuvA tetramers; dsDNA enters through RuvA and exits via RuvB. An RuvB hexamer assembles on each DNA strand where it exits the tetramer. Each RuvB hexamer is contacted by two RuvA subunits (via domain III) on 2 adjacent RuvB subunits; this complex drives branch migration. In the full resolvosome a probable DNA-RuvA(4)-RuvB(12)-RuvC(2) complex forms which resolves the HJ.

The protein resides in the cytoplasm. The catalysed reaction is ATP + H2O = ADP + phosphate + H(+). Functionally, the RuvA-RuvB-RuvC complex processes Holliday junction (HJ) DNA during genetic recombination and DNA repair, while the RuvA-RuvB complex plays an important role in the rescue of blocked DNA replication forks via replication fork reversal (RFR). RuvA specifically binds to HJ cruciform DNA, conferring on it an open structure. The RuvB hexamer acts as an ATP-dependent pump, pulling dsDNA into and through the RuvAB complex. RuvB forms 2 homohexamers on either side of HJ DNA bound by 1 or 2 RuvA tetramers; 4 subunits per hexamer contact DNA at a time. Coordinated motions by a converter formed by DNA-disengaged RuvB subunits stimulates ATP hydrolysis and nucleotide exchange. Immobilization of the converter enables RuvB to convert the ATP-contained energy into a lever motion, pulling 2 nucleotides of DNA out of the RuvA tetramer per ATP hydrolyzed, thus driving DNA branch migration. The RuvB motors rotate together with the DNA substrate, which together with the progressing nucleotide cycle form the mechanistic basis for DNA recombination by continuous HJ branch migration. Branch migration allows RuvC to scan DNA until it finds its consensus sequence, where it cleaves and resolves cruciform DNA. In Chlamydia caviae (strain ATCC VR-813 / DSM 19441 / 03DC25 / GPIC) (Chlamydophila caviae), this protein is Holliday junction branch migration complex subunit RuvB.